An 887-amino-acid chain; its full sequence is MWTPRAPPPRPALLFLLLLLLRVTHGLFPDEPPPLSVAPRDYLSHYPVFVGSGPGRLTPAEGAEDLNIQRVLRVNRTLFIGDRDNLYQVELEPSTSTELRYQRKLTWRSNPSDIDVCRMKGKQEGECRNFVKVLLLRDESTLFVCGSNAFNPICANYSMDTLQLLGDNISGMARCPYDPKHANVALFSDGMLFTATVTDFLAIDAVIYRSLGDRPTLRTVKHDSKWFKEPYFVHAVEWGSHVYFFFREIAMEFNYLEKVVVSRVARVCKNDVGGSPRVLEKQWTSFLKARLNCSVPGDSHFYFNVLQAVTGVVSLGGRPVILAVFSTPSNSIPGSAVCAFDMNQVAAVFEGRFREQKSPESIWTPVPEDQVPRPRPGCCAAPGMQYNASNALPDEILNFVKTHPLMDEAVPSLGHSPWIVRTLIRHQLTRVAVDVGAGPWGNQTIVFLGSEVGTVLKFLVKPNASVSGTTGPSIFLEEFETYRPDRCGRSSSAGEWGQRLLSLELDAASGGLLAAFPRCVVRVPVARCQLYSGCMKNCIGSQDPYCGWAPDGSCIFLRPGTSATFEQDVSGASTSGLGDCTGLLRASLSDDRAGLVSVNLLVTSSVAAFVVGAVVSGFSVGWFVGLRERRELARRKDKEAILAHGGSEAVLSVSRLGERRGTGTGGRGGAGGGPGGPPEALLAPLMQNGWTKAALLHGGPHDLDSGLLPTPEQTPLPQKRLPTTHPHAHALGPRAWDHSHALLSASASTSLLLLAHTRAPEQPPVPTESGPESRLCAPRSCRASHPGDFPLTPHASPDRRRVVSAPTGPLDSSSVGDDLPGPWSPPATSSLRRPGPHGPPTAALRRTHTFNSGEARPGGHRPRRHAPADSTHLLPCGTGERTAPPVP.

An N-terminal signal peptide occupies residues 1–26; that stretch reads MWTPRAPPPRPALLFLLLLLLRVTHG. The Extracellular segment spans residues 27–605; sequence LFPDEPPPLS…VSVNLLVTSS (579 aa). One can recognise a Sema domain in the interval 32-525; sequence PPPLSVAPRD…FPRCVVRVPV (494 aa). Asn-75 carries an N-linked (GlcNAc...) asparagine glycan. Cystine bridges form between Cys-117/Cys-127 and Cys-145/Cys-154. Residues Asn-156, Asn-168, and Asn-292 are each glycosylated (N-linked (GlcNAc...) asparagine). 2 disulfide bridges follow: Cys-268–Cys-379 and Cys-293–Cys-338. Asn-387, Asn-442, and Asn-463 each carry an N-linked (GlcNAc...) asparagine glycan. Cystine bridges form between Cys-487–Cys-519, Cys-528–Cys-546, Cys-534–Cys-580, and Cys-538–Cys-554. A helical membrane pass occupies residues 606-626; the sequence is VAAFVVGAVVSGFSVGWFVGL. Over 627–887 the chain is Cytoplasmic; that stretch reads RERRELARRK…TGERTAPPVP (261 aa). 3 disordered regions span residues 656 to 675, 697 to 717, and 759 to 887; these read LGER…GGPG, HGGP…TPLP, and APEQ…PPVP. The segment covering 662-674 has biased composition (gly residues); the sequence is TGTGGRGGAGGGP. An Omega-N-methylarginine modification is found at Arg-667. Low complexity predominate over residues 707 to 717; the sequence is LLPTPEQTPLP.

It belongs to the semaphorin family.

It localises to the cell membrane. Its function is as follows. Functions as a cell surface repellent for mossy fibers of developing neurons in the hippocampus where it plays a role in axon guidance. May function through the PLXNA4 receptor expressed by mossy cell axons. This is Semaphorin-6B (Sema6b) from Rattus norvegicus (Rat).